Here is a 291-residue protein sequence, read N- to C-terminus: Transmembrane protein 41B (291 aa).

Over residues 1-11 (MAKGRVAERSQ) the composition is skewed to basic and acidic residues. The tract at residues 1–38 (MAKGRVAERSQTEMLHSTPAGDRAVGTQGSAAPGNKDH) is disordered. Phosphothreonine is present on Thr18. The next 6 membrane-spanning stretches (helical) occupy residues 52 to 72 (TSLL…FLVY), 109 to 129 (FYVQ…TFAI), 147 to 169 (LALF…LSYL), 197 to 217 (LINY…FINI), 225 to 245 (PLKV…FVAI), and 262 to 282 (SWNS…PAIF). A VTT domain; required for its function in autophagy region spans residues 140 to 251 (GFLYPFPLAL…FVAIKAGTTL (112 aa)).

This sequence belongs to the TMEM41 family. As to quaternary structure, interacts with VMP1. Interacts with COPA, COPB1, VDAC1 and ERLIN2. Interacts with ATG2A. Interacts with SURF4.

It localises to the endoplasmic reticulum membrane. It is found in the endomembrane system. The catalysed reaction is a 1,2-diacyl-sn-glycero-3-phospho-L-serine(in) = a 1,2-diacyl-sn-glycero-3-phospho-L-serine(out). It carries out the reaction cholesterol(in) = cholesterol(out). The enzyme catalyses a 1,2-diacyl-sn-glycero-3-phosphocholine(in) = a 1,2-diacyl-sn-glycero-3-phosphocholine(out). It catalyses the reaction a 1,2-diacyl-sn-glycero-3-phosphoethanolamine(in) = a 1,2-diacyl-sn-glycero-3-phosphoethanolamine(out). Its function is as follows. Phospholipid scramblase involved in lipid homeostasis and membrane dynamics processes. Has phospholipid scramblase activity toward cholesterol and phosphatidylserine, as well as phosphatidylethanolamine and phosphatidylcholine. Required for autophagosome formation: participates in early stages of autophagosome biogenesis at the endoplasmic reticulum (ER) membrane by reequilibrating the leaflets of the ER as lipids are extracted by ATG2 (ATG2A or ATG2B) to mediate autophagosome assembly. In addition to autophagy, involved in other processes in which phospholipid scramblase activity is required. Required for normal motor neuron development. The sequence is that of Transmembrane protein 41B from Rattus norvegicus (Rat).